The following is a 404-amino-acid chain: Formate-dependent phosphoribosylglycinamide formyltransferase (404 aa).

Residues 25–26 (EL) and glutamate 85 each bind N(1)-(5-phospho-beta-D-ribosyl)glycinamide. Residues arginine 118, lysine 159, 164–169 (SSGKGQ), 199–202 (EGFI), and glutamate 207 contribute to the ATP site. Residues 123–318 (RLAAEELGLA…EFELHARAIL (196 aa)) form the ATP-grasp domain. Residues glutamate 277 and glutamate 289 each coordinate Mg(2+). N(1)-(5-phospho-beta-D-ribosyl)glycinamide-binding positions include aspartate 296, lysine 365, and 372 to 373 (RR).

Belongs to the PurK/PurT family. As to quaternary structure, homodimer.

The enzyme catalyses N(1)-(5-phospho-beta-D-ribosyl)glycinamide + formate + ATP = N(2)-formyl-N(1)-(5-phospho-beta-D-ribosyl)glycinamide + ADP + phosphate + H(+). It functions in the pathway purine metabolism; IMP biosynthesis via de novo pathway; N(2)-formyl-N(1)-(5-phospho-D-ribosyl)glycinamide from N(1)-(5-phospho-D-ribosyl)glycinamide (formate route): step 1/1. Its function is as follows. Involved in the de novo purine biosynthesis. Catalyzes the transfer of formate to 5-phospho-ribosyl-glycinamide (GAR), producing 5-phospho-ribosyl-N-formylglycinamide (FGAR). Formate is provided by PurU via hydrolysis of 10-formyl-tetrahydrofolate. The protein is Formate-dependent phosphoribosylglycinamide formyltransferase of Burkholderia vietnamiensis (strain G4 / LMG 22486) (Burkholderia cepacia (strain R1808)).